We begin with the raw amino-acid sequence, 402 residues long: Nicotinate phosphoribosyltransferase (402 aa).

Residue histidine 226 is modified to Phosphohistidine; by autocatalysis.

The protein belongs to the NAPRTase family. In terms of processing, transiently phosphorylated on a His residue during the reaction cycle. Phosphorylation strongly increases the affinity for substrates and increases the rate of nicotinate D-ribonucleotide production. Dephosphorylation regenerates the low-affinity form of the enzyme, leading to product release.

The catalysed reaction is nicotinate + 5-phospho-alpha-D-ribose 1-diphosphate + ATP + H2O = nicotinate beta-D-ribonucleotide + ADP + phosphate + diphosphate. The protein operates within cofactor biosynthesis; NAD(+) biosynthesis; nicotinate D-ribonucleotide from nicotinate: step 1/1. Functionally, catalyzes the synthesis of beta-nicotinate D-ribonucleotide from nicotinate and 5-phospho-D-ribose 1-phosphate at the expense of ATP. The sequence is that of Nicotinate phosphoribosyltransferase from Chromobacterium violaceum (strain ATCC 12472 / DSM 30191 / JCM 1249 / CCUG 213 / NBRC 12614 / NCIMB 9131 / NCTC 9757 / MK).